The chain runs to 417 residues: Phosphoglycerate kinase 1 (417 aa).

Serine 2 carries the post-translational modification N-acetylserine. Serine 2 and serine 4 each carry phosphoserine. Position 6 is an N6-succinyllysine (lysine 6). Lysine 11 is subject to N6-acetyllysine. (2R)-3-phosphoglycerate contacts are provided by valine 23, aspartate 24, phenylalanine 25, asparagine 26, glutamine 38, and arginine 39. A mitochondrial targeting region exposed following cis-trans isomerization by PIN1 and recognized by the TOM complex for mitochondrial translocation of the protein region spans residues 38 to 43 (QRIKAA). Position 48 is an N6-acetyllysine; alternate (lysine 48). Lysine 48 is modified (N6-succinyllysine; alternate). (2R)-3-phosphoglycerate contacts are provided by serine 62, histidine 63, glycine 65, and arginine 66. Lysine 75 carries the post-translational modification N6-acetyllysine. Residue tyrosine 76 is modified to Phosphotyrosine. Lysine 86 and lysine 91 each carry N6-acetyllysine. An N6-acetyllysine; alternate modification is found at lysine 97. The residue at position 97 (lysine 97) is an N6-(2-hydroxyisobutyryl)lysine; alternate. Leucine 122 and arginine 123 together coordinate (2R)-3-phosphoglycerate. Lysine 131 carries the post-translational modification N6-acetyllysine; alternate. At lysine 131 the chain carries N6-malonyllysine; alternate. Lysine 146 is subject to N6-acetyllysine. Residues histidine 170 and arginine 171 each coordinate (2R)-3-phosphoglycerate. Lysine 191 is subject to N6-succinyllysine. The residue at position 196 (tyrosine 196) is a Phosphotyrosine. Lysine 199 carries the post-translational modification N6-acetyllysine. The residue at position 203 (serine 203) is a Phosphoserine. Glycine 214 contributes to the ADP binding site. Glycine 214 is a binding site for CDP. AMP-binding residues include alanine 215 and lysine 216. Residue alanine 215 participates in ATP binding. Mg(2+) is bound at residue alanine 215. The residue at position 216 (lysine 216) is an N6-(2-hydroxyisobutyryl)lysine. Mg(2+) is bound by residues alanine 218 and aspartate 219. Aspartate 219 lines the CDP pocket. Lysine 220 contacts AMP. An ATP-binding site is contributed by lysine 220. At lysine 220 the chain carries N6-(2-hydroxyisobutyryl)lysine. Glycine 238 lines the ADP pocket. Glycine 238 provides a ligand contact to CDP. An AMP-binding site is contributed by glycine 239. Glycine 239 is a binding site for ATP. Lysine 267 and lysine 291 each carry N6-acetyllysine. Glycine 313 contributes to the AMP binding site. Position 313 (glycine 313) interacts with ATP. Lysine 323 carries the post-translational modification N6-(2-hydroxyisobutyryl)lysine. Residues glycine 338, valine 340, and phenylalanine 343 each coordinate CDP. Phenylalanine 343 lines the ADP pocket. Glutamate 344 is an AMP binding site. Glutamate 344 contributes to the ATP binding site. The residue at position 361 (lysine 361) is an N6-acetyllysine. Positions 375 and 376 each coordinate ATP. Aspartate 375 lines the Mg(2+) pocket.

Belongs to the phosphoglycerate kinase family. Monomer. Interacts with kinase MAPK1/ERK2; the interaction is direct, occurs under hypoxic conditions, and promotes its interaction with PIN1. Interacts with peptidyl-prolyl cis-trans isomerase PIN1; the interaction is direct, occurs under hypoxic conditions, and targets the protein to the mitochondrion by promoting interactions with the TOM complex. Interacts with mitochondrial circRNA mcPGK1 (via its 2nd stem-loop); the interaction is direct and targets the protein to the mitochondrion by promoting interactions with the TOM complex. Interacts with pyruvate dehydrogenase kinase PDK1; the interaction is direct, occurs under hypoxic conditions and leads to PDK1-mediated inhibition of pyruvate dehydrogenase complex activity. Mg(2+) serves as cofactor. Phosphorylated at Ser-203 by MAPK1/ERK2 under hypoxic conditions, which promotes its mitochondrial targeting.

It is found in the cytoplasm. It localises to the cytosol. Its subcellular location is the mitochondrion matrix. The enzyme catalyses (2R)-3-phosphoglycerate + ATP = (2R)-3-phospho-glyceroyl phosphate + ADP. It catalyses the reaction L-seryl-[protein] + ATP = O-phospho-L-seryl-[protein] + ADP + H(+). The protein operates within carbohydrate degradation; glycolysis; pyruvate from D-glyceraldehyde 3-phosphate: step 2/5. Functionally, catalyzes one of the two ATP producing reactions in the glycolytic pathway via the reversible conversion of 1,3-diphosphoglycerate to 3-phosphoglycerate. Both L- and D- forms of purine and pyrimidine nucleotides can be used as substrates, but the activity is much lower on pyrimidines. In addition to its role as a glycolytic enzyme, it seems that PGK-1 acts as a polymerase alpha cofactor protein (primer recognition protein). Acts as a protein kinase when localized to the mitochondrion where it phosphorylates pyruvate dehydrogenase kinase PDK1 to inhibit pyruvate dehydrogenase complex activity and suppress the formation of acetyl-coenzyme A from pyruvate, and consequently inhibit oxidative phosphorylation and promote glycolysis. May play a role in sperm motility. The polypeptide is Phosphoglycerate kinase 1 (PGK1) (Macaca fascicularis (Crab-eating macaque)).